A 1396-amino-acid polypeptide reads, in one-letter code: DNA-directed RNA polymerase subunit beta' (1396 aa).

4 residues coordinate Zn(2+): Cys70, Cys72, Cys85, and Cys88. Mg(2+)-binding residues include Asp460, Asp462, and Asp464. Positions 814, 889, 896, and 899 each coordinate Zn(2+).

The protein belongs to the RNA polymerase beta' chain family. As to quaternary structure, the RNAP catalytic core consists of 2 alpha, 1 beta, 1 beta' and 1 omega subunit. When a sigma factor is associated with the core the holoenzyme is formed, which can initiate transcription. Mg(2+) serves as cofactor. The cofactor is Zn(2+).

It catalyses the reaction RNA(n) + a ribonucleoside 5'-triphosphate = RNA(n+1) + diphosphate. DNA-dependent RNA polymerase catalyzes the transcription of DNA into RNA using the four ribonucleoside triphosphates as substrates. The protein is DNA-directed RNA polymerase subunit beta' of Hahella chejuensis (strain KCTC 2396).